Consider the following 148-residue polypeptide: tRNA-specific adenosine deaminase (148 aa).

A CMP/dCMP-type deaminase domain is found at 1 to 116; sequence MEQALKQARL…SNLRYFNSSA (116 aa). A Zn(2+)-binding site is contributed by H48. E50 functions as the Proton donor in the catalytic mechanism. Zn(2+)-binding residues include C78 and C81.

This sequence belongs to the cytidine and deoxycytidylate deaminase family. In terms of assembly, homodimer. The cofactor is Zn(2+).

The catalysed reaction is adenosine(34) in tRNA + H2O + H(+) = inosine(34) in tRNA + NH4(+). In terms of biological role, catalyzes the deamination of adenosine to inosine at the wobble position 34 of tRNA(Arg2). This Rickettsia typhi (strain ATCC VR-144 / Wilmington) protein is tRNA-specific adenosine deaminase.